A 589-amino-acid chain; its full sequence is UvrABC system protein C (589 aa).

The GIY-YIG domain occupies 10–87; it reads ESSGVYLMKK…IKKYSPKYNI (78 aa). Residues 197 to 232 enclose the UVR domain; that stretch reads SKLINELTALMNKASQDMDFEKSIIYREQIKELKSI.

This sequence belongs to the UvrC family. In terms of assembly, interacts with UvrB in an incision complex.

The protein localises to the cytoplasm. Its function is as follows. The UvrABC repair system catalyzes the recognition and processing of DNA lesions. UvrC both incises the 5' and 3' sides of the lesion. The N-terminal half is responsible for the 3' incision and the C-terminal half is responsible for the 5' incision. The protein is UvrABC system protein C of Fusobacterium nucleatum subsp. nucleatum (strain ATCC 25586 / DSM 15643 / BCRC 10681 / CIP 101130 / JCM 8532 / KCTC 2640 / LMG 13131 / VPI 4355).